A 209-amino-acid chain; its full sequence is Thymidine kinase (209 aa).

ATP-binding positions include Ser-9–Thr-16 and Asp-88–Gln-91. The active-site Proton acceptor is Glu-89.

Belongs to the thymidine kinase family. Homotetramer.

The protein resides in the cytoplasm. The catalysed reaction is thymidine + ATP = dTMP + ADP + H(+). This is Thymidine kinase from Xanthomonas axonopodis pv. citri (strain 306).